Consider the following 274-residue polypeptide: Enoyl-CoA isomerase/hydratase fer4 (274 aa).

Substrate is bound by residues A77 to L81 and G124. A coiled-coil region spans residues A79–L109.

It belongs to the enoyl-CoA hydratase/isomerase family.

It catalyses the reaction a (3S)-3-hydroxyacyl-CoA = a (2E)-enoyl-CoA + H2O. It carries out the reaction a 4-saturated-(3S)-3-hydroxyacyl-CoA = a (3E)-enoyl-CoA + H2O. It functions in the pathway siderophore biosynthesis. Enoyl-CoA isomerase/hydratase; part of the gene cluster that mediates the biosynthesis of siderophore ferrichrome A which is contributing to organismal virulence. The first step of ferrichrome A biosynthesis is performed by the HMG-CoA synthase hcs1 which catalyzes the generation of HMG-CoA and CoA using acetoacetyl-CoA and acetyl-CoA as substrates. The enoyl-CoA isomerase/hydratase fer4 then catalyzes the conversion of hcs1-produced HMG-CoA to methylglutaconyl-CoA. The acyltransferase fer5 then fuses the fer4-generated methylglutaconyl-CoA with sid1-generated hydroxyornithine to yield methylglutaconyl hydroxyornithine. Methylglutaconyl hydroxyornithine is then available for use by the NRPS fer3 to generate ferrichrome A. In Mycosarcoma maydis (Corn smut fungus), this protein is Enoyl-CoA isomerase/hydratase fer4.